Consider the following 205-residue polypeptide: Small ribosomal subunit protein uS4 (205 aa).

A disordered region spans residues 20–46 (WGRSKSPVNRREYGPGQHGQRRKGKLS). The S4 RNA-binding domain maps to 94 to 157 (RRLDAVVYRA…RQLTLVLEAS (64 aa)).

This sequence belongs to the universal ribosomal protein uS4 family. In terms of assembly, part of the 30S ribosomal subunit. Contacts protein S5. The interaction surface between S4 and S5 is involved in control of translational fidelity.

In terms of biological role, one of the primary rRNA binding proteins, it binds directly to 16S rRNA where it nucleates assembly of the body of the 30S subunit. Its function is as follows. With S5 and S12 plays an important role in translational accuracy. This chain is Small ribosomal subunit protein uS4, found in Beijerinckia indica subsp. indica (strain ATCC 9039 / DSM 1715 / NCIMB 8712).